Reading from the N-terminus, the 162-residue chain is Probable chemoreceptor glutamine deamidase CheD (162 aa).

Belongs to the CheD family.

The catalysed reaction is L-glutaminyl-[protein] + H2O = L-glutamyl-[protein] + NH4(+). Its function is as follows. Probably deamidates glutamine residues to glutamate on methyl-accepting chemotaxis receptors (MCPs), playing an important role in chemotaxis. The chain is Probable chemoreceptor glutamine deamidase CheD from Syntrophotalea carbinolica (strain DSM 2380 / NBRC 103641 / GraBd1) (Pelobacter carbinolicus).